A 502-amino-acid chain; its full sequence is MEETNIRVVLYSIFSLIFLIISFKFLKPKKQNLPPSPPGWLPIIGHLRLLKPPIHRTLRSFSETLDHNDGGGVMSLRLGSRLVYVVSSHKVAAEECFGKNDVVLANRPQVIIGKHVGYNNTNMIAAPYGDHWRNLRRLCTIEIFSTHRLNCFLYVRTDEVRRLISRLSRLAGTKKTVVELKPMLMDLTFNNIMRMMTGKRYYGEETTDEEEAKRVRKLVADVGANTSSGNAVDYVPILRLFSSYENRVKKLGEETDKFLQGLIDDKRGQQETGTTMIDHLLVLQKSDIEYYTDQIIKGIILIMVIAGTNTSAVTLEWALSNLLNHPDVISKARDEIDNRVGLDRLIEEADLSELPYLKNIVLETLRLHPATPLLVPHMASEDCKIGSYDMPRGTTLLVNAWAIHRDPNTWDDPDSFKPERFEKEEEAQKLLAFGLGRRACPGSGLAQRIVGLALGSLIQCFEWERVGNVEVDMKEGVGNTVPKAIPLKAICKARPFLHKIIS.

A helical transmembrane segment spans residues 6–26 (IRVVLYSIFSLIFLIISFKFL). Cys-440 serves as a coordination point for heme.

The protein belongs to the cytochrome P450 family. Requires heme as cofactor.

The protein resides in the membrane. In Arabidopsis thaliana (Mouse-ear cress), this protein is Cytochrome P450 81D1 (CYP81D1).